The chain runs to 411 residues: ATP-dependent Clp protease ATP-binding subunit ClpX (411 aa).

Residues 1 to 51 (MAKKKDEEYCSFCGMPRTQVNLMLEGVHAHICDECALRAGEVVREALQKFK) form the ClpX-type ZB domain. Zn(2+)-binding residues include C10, C13, C32, and C35. An ATP-binding site is contributed by 119 to 126 (PTGTGKTL).

It belongs to the ClpX chaperone family. As to quaternary structure, component of the ClpX-ClpP complex. Forms a hexameric ring that, in the presence of ATP, binds to fourteen ClpP subunits assembled into a disk-like structure with a central cavity, resembling the structure of eukaryotic proteasomes.

Functionally, ATP-dependent specificity component of the Clp protease. It directs the protease to specific substrates. Can perform chaperone functions in the absence of ClpP. This is ATP-dependent Clp protease ATP-binding subunit ClpX from Porphyromonas gingivalis (strain ATCC 33277 / DSM 20709 / CIP 103683 / JCM 12257 / NCTC 11834 / 2561).